The following is a 75-amino-acid chain: Translational regulator CsrA (75 aa).

Belongs to the CsrA/RsmA family. As to quaternary structure, homodimer; the beta-strands of each monomer intercalate to form a hydrophobic core, while the alpha-helices form wings that extend away from the core.

The protein localises to the cytoplasm. A translational regulator that binds mRNA to regulate translation initiation and/or mRNA stability. Usually binds in the 5'-UTR at or near the Shine-Dalgarno sequence preventing ribosome-binding, thus repressing translation. Its main target seems to be the major flagellin gene, while its function is anatagonized by FliW. The chain is Translational regulator CsrA from Alkaliphilus metalliredigens (strain QYMF).